The following is a 458-amino-acid chain: Probable alpha-L-glutamate ligase (458 aa).

Residues 1 to 162 (MSDNKFIIGS…YGVKTAKKSG (162 aa)) form a unknown region. An alpha-L-glutamate ligase region spans residues 163–458 (LKIGLLASNP…IEKKLGWKAD (296 aa)). An ATP-grasp domain is found at 267-450 (LQLLQKNNLD…IAGAMIESIE (184 aa)). Residues K304, 341–342 (EF), D350, and 374–376 (RAN) each bind ATP. Positions 411, 423, and 425 each coordinate Mg(2+). 3 residues coordinate Mn(2+): D411, E423, and N425.

In the C-terminal section; belongs to the RimK family. It depends on Mg(2+) as a cofactor. Mn(2+) is required as a cofactor.

This chain is Probable alpha-L-glutamate ligase, found in Shewanella pealeana (strain ATCC 700345 / ANG-SQ1).